Here is a 206-residue protein sequence, read N- to C-terminus: Small ribosomal subunit protein uS7 (206 aa).

Over residues 1–19 (MSAEDTPEADADAAEESEP) the composition is skewed to acidic residues. The interval 1–25 (MSAEDTPEADADAAEESEPETARAK) is disordered. Ser2 bears the N-acetylserine mark.

Belongs to the universal ribosomal protein uS7 family. In terms of assembly, part of the 30S ribosomal subunit.

Functionally, one of the primary rRNA binding proteins, it binds directly to 16S rRNA where it nucleates assembly of the head domain of the 30S subunit. Is located at the subunit interface close to the decoding center. The sequence is that of Small ribosomal subunit protein uS7 from Haloarcula marismortui (strain ATCC 43049 / DSM 3752 / JCM 8966 / VKM B-1809) (Halobacterium marismortui).